The primary structure comprises 871 residues: DNA mismatch repair protein MutS (871 aa).

616–623 lines the ATP pocket; that stretch reads GPNMAGKS. The segment at 801-825 is disordered; that stretch reads ETEKTEESMEGTNLPKKKKEEKTSS.

The protein belongs to the DNA mismatch repair MutS family.

Functionally, this protein is involved in the repair of mismatches in DNA. It is possible that it carries out the mismatch recognition step. This protein has a weak ATPase activity. The protein is DNA mismatch repair protein MutS of Clostridium kluyveri (strain NBRC 12016).